Reading from the N-terminus, the 899-residue chain is Plasma membrane ATPase (899 aa).

A disordered region spans residues 1–72 (MSAATEPTKE…TDPSYGLTSD (72 aa)). Topologically, residues 1–96 (MSAATEPTKE…SEETENLFVK (96 aa)) are cytoplasmic. Residues 17–29 (DSDDEDEDIDQLI) are compositionally biased toward acidic residues. Residues 97–117 (FLMFFIGPIQFVMEAAAILAA) traverse the membrane as a helical segment. The Extracellular portion of the chain corresponds to 118-121 (GLED). Residues 122 to 141 (WVDFGVICGLLFLNAAVGFI) traverse the membrane as a helical segment. The Cytoplasmic segment spans residues 142–272 (QEYQAGSIVD…GSGHFTEVLN (131 aa)). Residues 273–294 (GIGTILLILVIVTLLLVWVASF) form a helical membrane-spanning segment. Topologically, residues 295 to 305 (YRTNKIVRILR) are extracellular. Residues 306-328 (YTLAITIVGVPVGLPAVVTTTMA) traverse the membrane as a helical segment. Residues 329-700 (VGAAYLAKKQ…IAILNRSLNI (372 aa)) lie on the Cytoplasmic side of the membrane. Asp-359 (4-aspartylphosphate intermediate) is an active-site residue. 2 residues coordinate Mg(2+): Asp-615 and Asp-619. Residues 701 to 719 (DLVVFIAIFADVATLAIAY) traverse the membrane as a helical segment. The Extracellular segment spans residues 720–735 (DNAPYSPKPVKWNLRR). The chain crosses the membrane as a helical span at residues 736–755 (LWGMSVILGIILAIGTWITL). The Cytoplasmic segment spans residues 756–805 (TTMFVPKGGIIQNFGSIDGVLFLQISLTENWLIFITRAAGPFWSSIPSWQ). Residues 806–826 (LSGAVLIVDIIATMFCLFGWW) form a helical membrane-spanning segment. Residues 827–838 (SQNWNDIVTVVR) lie on the Extracellular side of the membrane. Residues 839 to 855 (VWIFSFGVFCVMGGAYY) form a helical membrane-spanning segment. The Cytoplasmic portion of the chain corresponds to 856–899 (MMSESEAFDRFMNGKSRRDKPSGRSVEDFLMAMQRVSTQHEKEN).

Belongs to the cation transport ATPase (P-type) (TC 3.A.3) family. Type IIIA subfamily.

Its subcellular location is the cell membrane. It catalyses the reaction ATP + H2O + H(+)(in) = ADP + phosphate + 2 H(+)(out). Its activity is regulated as follows. Activated by high pH or also by potassium ions when the medium pH is low. The plasma membrane ATPase of plants and fungi is a hydrogen ion pump. The proton gradient it generates drives the active transport of nutrients by H(+)-symport. The resulting external acidification and/or internal alkinization may mediate growth responses. In Kluyveromyces lactis (strain ATCC 8585 / CBS 2359 / DSM 70799 / NBRC 1267 / NRRL Y-1140 / WM37) (Yeast), this protein is Plasma membrane ATPase (PMA1).